A 287-amino-acid chain; its full sequence is MSDAQFDAALDLLRRLNPTTLQENLNNLIELQPNLAQDLLSSVDVPLSTQKDSADSNREYLCCDYNRDIDSFRSPWSNTYYPELSPKDLQDSPFPSAPLRKLEILANDSFDVYRDLYYEGGISSVYLWDLNEEDFNGHDFAGVVLFKKNQSDHSNWDSIHVFEVTTSPSSPDSFNYRVTTTIILHLDKTKTDQNSHMMLSGNLTRQTEKDIAIDMSRPLDVIFTSHVANLGSLIEDIESQMRNLLETVYFEKTRDIFHQTKNAAIASSAEEANKDAQAEVIRGLQSL.

S2 carries the post-translational modification N-acetylserine. Phosphoserine is present on residues S85 and S92.

Belongs to the F-actin-capping protein beta subunit family. In terms of assembly, component of the F-actin capping complex, composed of a heterodimer of an alpha and a beta subunit. Interacts with BSP1 (via C-terminus); leading to recruitment of the F-actin capping complex to actin cortical patches and the acomyosin contractile ring.

It localises to the cytoplasm. The protein resides in the cytoskeleton. The protein localises to the actin patch. It is found in the bud. Its subcellular location is the bud tip. In terms of biological role, F-actin-capping proteins bind in a Ca(2+)-independent manner to the fast growing ends of actin filaments (barbed end) thereby blocking the exchange of subunits at these ends. Unlike other capping proteins (such as gelsolin and severin), these proteins do not sever actin filaments. The protein is F-actin-capping protein subunit beta (CAP2) of Saccharomyces cerevisiae (strain ATCC 204508 / S288c) (Baker's yeast).